The sequence spans 300 residues: MTDTPDPAAVLSPAVKAAVLSEALPYIRRFHGKTIVVKYGGNAMTEERLQRSFAHDVVLLKLVGLNPVVVHGGGPQIDDALRRIGKQGTFVQGMRVTDAETMEVVEWVLGGQVQQDIVMMINEVGGKAVGLTGKDGMLIQATKKLMVNKDDPSQPLDIGFVGDITRVEPAVVKALQDDQFIPVISPIGYGEDGTAYNINADVVAGKMAEVLGAEKLLMMTNTPGVLDKGGKLLRSLSAQTIDELFADGTISGGMLPKISSSLDAAKNGVNSVHIVDGRVPHCLLLEILTDQGVGTMISSH.

Residues 73–74 (GG), R95, and N197 each bind substrate.

Belongs to the acetylglutamate kinase family. ArgB subfamily.

Its subcellular location is the cytoplasm. The enzyme catalyses N-acetyl-L-glutamate + ATP = N-acetyl-L-glutamyl 5-phosphate + ADP. It functions in the pathway amino-acid biosynthesis; L-arginine biosynthesis; N(2)-acetyl-L-ornithine from L-glutamate: step 2/4. In terms of biological role, catalyzes the ATP-dependent phosphorylation of N-acetyl-L-glutamate. This is Acetylglutamate kinase from Bordetella bronchiseptica (strain ATCC BAA-588 / NCTC 13252 / RB50) (Alcaligenes bronchisepticus).